Here is a 317-residue protein sequence, read N- to C-terminus: MTDKLTSLRQYTTVVADTGDIAAMKLYQPQDATTNPSLILNAAQIPEYRKLIDDAVAWAKQQSNDRAQQIVDATDKLAVNIGLEILKLVPGRISTEVDARLSYDTEASIAKAKRLIKLYNDAGISNDRILIKLASTWQGIRAAEQLEKEGINCNLTLLFSFAQARACAEAGVFLISPFVGRILDWYKANTDKKEYAPAEDPGVVSVSEIYQYYKEHGYETVVMGASFRNIGEILELAGCDRLTIAPALLKELAESEGAIERKLSYTGEVKARPARITESEFLWQHNQDPMAVDKLAEGIRKFAIDQEKLEKMIGDLL.

Lys-132 functions as the Schiff-base intermediate with substrate in the catalytic mechanism.

This sequence belongs to the transaldolase family. Type 1 subfamily. As to quaternary structure, homodimer.

It localises to the cytoplasm. The enzyme catalyses D-sedoheptulose 7-phosphate + D-glyceraldehyde 3-phosphate = D-erythrose 4-phosphate + beta-D-fructose 6-phosphate. It participates in carbohydrate degradation; pentose phosphate pathway; D-glyceraldehyde 3-phosphate and beta-D-fructose 6-phosphate from D-ribose 5-phosphate and D-xylulose 5-phosphate (non-oxidative stage): step 2/3. Transaldolase is important for the balance of metabolites in the pentose-phosphate pathway. This chain is Transaldolase 1, found in Shigella sonnei (strain Ss046).